The following is a 386-amino-acid chain: Diaminopimelate decarboxylase (386 aa).

The residue at position 49 (Lys49) is an N6-(pyridoxal phosphate)lysine. Pyridoxal 5'-phosphate-binding positions include Gly228 and 266-269; that span reads ELGR. Substrate is bound by residues Arg269, Arg305, Tyr309, Glu335, and Tyr363. Tyr363 is a binding site for pyridoxal 5'-phosphate.

It belongs to the Orn/Lys/Arg decarboxylase class-II family. LysA subfamily. Homodimer. Pyridoxal 5'-phosphate is required as a cofactor.

The catalysed reaction is meso-2,6-diaminopimelate + H(+) = L-lysine + CO2. The protein operates within amino-acid biosynthesis; L-lysine biosynthesis via DAP pathway; L-lysine from DL-2,6-diaminopimelate: step 1/1. Specifically catalyzes the decarboxylation of meso-diaminopimelate (meso-DAP) to L-lysine. The protein is Diaminopimelate decarboxylase of Bacteroides thetaiotaomicron (strain ATCC 29148 / DSM 2079 / JCM 5827 / CCUG 10774 / NCTC 10582 / VPI-5482 / E50).